The following is a 385-amino-acid chain: Probable protein phosphatase 2C 79 (385 aa).

Positions 1-18 (MLSLFFNFLTSCLWPSSS) are cleaved as a signal peptide. Positions 47–356 (DFSMAVVQAN…DDITVVVLFL (310 aa)) constitute a PPM-type phosphatase domain. Phosphoserine is present on S76. Mn(2+) contacts are provided by D87, G88, D288, and D347.

This sequence belongs to the PP2C family. The cofactor is Mg(2+). It depends on Mn(2+) as a cofactor.

The catalysed reaction is O-phospho-L-seryl-[protein] + H2O = L-seryl-[protein] + phosphate. The enzyme catalyses O-phospho-L-threonyl-[protein] + H2O = L-threonyl-[protein] + phosphate. May dephosphorylate and repress plasma membrane H(+)-ATPases (PM H(+)-ATPases, e.g. AHA1 and AHA2), thus influencing negatively plant growth and fitness. The protein is Probable protein phosphatase 2C 79 of Arabidopsis thaliana (Mouse-ear cress).